The primary structure comprises 445 residues: Probable glycine dehydrogenase (decarboxylating) subunit 1 (445 aa).

The protein belongs to the GcvP family. N-terminal subunit subfamily. As to quaternary structure, the glycine cleavage system is composed of four proteins: P, T, L and H. In this organism, the P 'protein' is a heterodimer of two subunits.

It catalyses the reaction N(6)-[(R)-lipoyl]-L-lysyl-[glycine-cleavage complex H protein] + glycine + H(+) = N(6)-[(R)-S(8)-aminomethyldihydrolipoyl]-L-lysyl-[glycine-cleavage complex H protein] + CO2. Functionally, the glycine cleavage system catalyzes the degradation of glycine. The P protein binds the alpha-amino group of glycine through its pyridoxal phosphate cofactor; CO(2) is released and the remaining methylamine moiety is then transferred to the lipoamide cofactor of the H protein. The polypeptide is Probable glycine dehydrogenase (decarboxylating) subunit 1 (Citrifermentans bemidjiense (strain ATCC BAA-1014 / DSM 16622 / JCM 12645 / Bem) (Geobacter bemidjiensis)).